The primary structure comprises 225 residues: Protein-disulfide oxidoreductase DsbI (225 aa).

A helical transmembrane segment spans residues 27-47; that stretch reads FLWLLMAIAMGGLIILAHSFF. A disulfide bridge links cysteine 56 with cysteine 59. 2 helical membrane passes run 65–85 and 87–107; these read AMFV…NIVL and LIGC…SIKL. Residues cysteine 128 and cysteine 154 are joined by a disulfide bond. A helical transmembrane segment spans residues 199-219; that stretch reads CMLAFGLCLILLLVMSGAWAL.

Belongs to the DsbB family. DsbI subfamily. Interacts with DsbL.

The protein localises to the cell inner membrane. Required for disulfide bond formation in some proteins. Part of a redox system composed of DsbI and DsbL that mediates formation of an essential disulfide bond in AssT. The sequence is that of Protein-disulfide oxidoreductase DsbI from Salmonella choleraesuis (strain SC-B67).